A 373-amino-acid polypeptide reads, in one-letter code: Indole glucosinolate O-methyltransferase 3 (373 aa).

S-adenosyl-L-homocysteine-binding residues include Gly-217, Asp-240, Asp-260, Met-261, and Lys-274. His-278 functions as the Proton acceptor in the catalytic mechanism.

This sequence belongs to the class I-like SAM-binding methyltransferase superfamily. Cation-independent O-methyltransferase family.

Its pathway is secondary metabolite biosynthesis. Functionally, involved in indole glucosinolate biosynthesis. Catalyzes methoxylation reactions of the glucosinolate indole ring. Converts the hydroxy intermediates 4-hydroxy-indol-3-yl-methylglucosinolate (4OH-I3M) and 1-hydroxy-indol-3-yl-methylglucosinolate (1OH-I3M) to 4-methoxy-indol-3-yl-methylglucosinolate (4MO-I3M) and 1-methoxy-indol-3-yl-methylglucosinolate(1MO-I3M), respectively. The chain is Indole glucosinolate O-methyltransferase 3 from Arabidopsis thaliana (Mouse-ear cress).